Consider the following 489-residue polypeptide: Glutamyl-tRNA(Gln) amidotransferase subunit A (489 aa).

Residues Lys80 and Ser160 each act as charge relay system in the active site. The Acyl-ester intermediate role is filled by Ser184.

This sequence belongs to the amidase family. GatA subfamily. In terms of assembly, heterotrimer of A, B and C subunits.

The catalysed reaction is L-glutamyl-tRNA(Gln) + L-glutamine + ATP + H2O = L-glutaminyl-tRNA(Gln) + L-glutamate + ADP + phosphate + H(+). Its function is as follows. Allows the formation of correctly charged Gln-tRNA(Gln) through the transamidation of misacylated Glu-tRNA(Gln) in organisms which lack glutaminyl-tRNA synthetase. The reaction takes place in the presence of glutamine and ATP through an activated gamma-phospho-Glu-tRNA(Gln). This Wolbachia sp. subsp. Drosophila simulans (strain wRi) protein is Glutamyl-tRNA(Gln) amidotransferase subunit A.